The primary structure comprises 169 residues: S-ribosylhomocysteine lyase (169 aa).

Fe cation-binding residues include His-54, His-58, and Cys-128.

Belongs to the LuxS family. Homodimer. It depends on Fe cation as a cofactor.

The enzyme catalyses S-(5-deoxy-D-ribos-5-yl)-L-homocysteine = (S)-4,5-dihydroxypentane-2,3-dione + L-homocysteine. Functionally, involved in the synthesis of autoinducer 2 (AI-2) which is secreted by bacteria and is used to communicate both the cell density and the metabolic potential of the environment. The regulation of gene expression in response to changes in cell density is called quorum sensing. Catalyzes the transformation of S-ribosylhomocysteine (RHC) to homocysteine (HC) and 4,5-dihydroxy-2,3-pentadione (DPD). This is S-ribosylhomocysteine lyase from Shewanella sp. (strain MR-4).